The sequence spans 780 residues: Acyl-CoA dehydrogenase family member 11 (780 aa).

The residue at position 177 (Lys-177) is an N6-acetyllysine. Tyr-324 is subject to Phosphotyrosine. Lys-391 is modified (N6-succinyllysine). FAD-binding positions include 504–514 and 538–540; these read FCMTEPDVASS and WSS. Position 514 (Ser-514) interacts with substrate. Position 629–632 (629–632) interacts with substrate; sequence GPGR. FAD-binding positions include Arg-657, Gln-727, and 727 to 731; that span reads QVCGG. Gly-755 lines the substrate pocket. 756–758 provides a ligand contact to FAD; it reads PDE.

Belongs to the acyl-CoA dehydrogenase family. In terms of assembly, homodimer. The cofactor is FAD. In terms of tissue distribution, widely expressed with highest levels in brain followed by liver, heart and kidney.

Its subcellular location is the peroxisome. The protein resides in the mitochondrion membrane. It carries out the reaction a 2,3-saturated acyl-CoA + oxidized [electron-transfer flavoprotein] + H(+) = a (2E)-enoyl-CoA + reduced [electron-transfer flavoprotein]. The catalysed reaction is docosanoyl-CoA + oxidized [electron-transfer flavoprotein] + H(+) = (2E)-docosenoyl-CoA + reduced [electron-transfer flavoprotein]. It catalyses the reaction tetracosanoyl-CoA + oxidized [electron-transfer flavoprotein] + H(+) = (2E)-tetracosenoyl-CoA + reduced [electron-transfer flavoprotein]. The enzyme catalyses eicosanoyl-CoA + oxidized [electron-transfer flavoprotein] + H(+) = (2E)-eicosenoyl-CoA + reduced [electron-transfer flavoprotein]. It carries out the reaction hexacosanoyl-CoA + oxidized [electron-transfer flavoprotein] + H(+) = (2E)-hexacosenoyl-CoA + reduced [electron-transfer flavoprotein]. The catalysed reaction is tricosanoyl-CoA + oxidized [electron-transfer flavoprotein] + H(+) = (2E)-tricosenoyl-CoA + reduced [electron-transfer flavoprotein]. The protein operates within lipid metabolism; fatty acid beta-oxidation. Acyl-CoA dehydrogenase, that exhibits maximal activity towards saturated C22-CoA. Probably participates in beta-oxydation and energy production but could also play a role in the metabolism of specific fatty acids to control fatty acids composition of cellular lipids in brain. The chain is Acyl-CoA dehydrogenase family member 11 (ACAD11) from Homo sapiens (Human).